We begin with the raw amino-acid sequence, 1235 residues long: MFSGGGGPLSPGGKSAARAASGFFAPAGPRGAGRGPPPCLRQNFYNPYLAPVGTQQKPTGPTQRHTYYSECDEFRFIAPRVLDEDAPPEKRAGVHDGHLKRAPKVYCGGDERDVLRVGSGGFWPRRSRLWGGVDHAPAGFNPTVTVFHVYDILENVEHAYGMRAAQFHARFMDAITPTGTVITLLGLTPEGHRVAVHVYGTRQYFYMNKEEVDRHLQCRAPRDLCERMAAALRESPGASFRGISADHFEAEVVERTDVYYYETRPALFYRVYVRSGRVLSYLCDNFCPAIKKYEGGVDATTRFILDNPGFVTFGWYRLKPGRNNTLAQPRAPMAFGTSSDVEFNCTADNLAIEGGMSDLPAYKLMCFDIECKAGGEDELAFPVAGHPEDLVIQISCLLYDLSTTALEHVLLFSLGSCDLPESHLNELAARGLPTPVVLEFDSEFEMLLAFMTLVKQYGPEFVTGYNIINFDWPFLLAKLTDIYKVPLDGYGRMNGRGVFRVWDIGQSHFQKRSKIKVNGMVSIDMYGIITDKIKLSSYKLNAVAEAVLKDKKKDLSYRDIPAYYAAGPAQRGVIGEYCIQDSLLVGQLFFKFLPHLELSAVARLAGINITRTIYDGQQIRVFTCLLRLADQKGFILPDTQGRFRGAGGEAPKRPAAAREDEERPEEEGEDEDEREEGGGEREPDGARETAGRHVGYQGARVLDPTSGFHVNPVVVFDFASLYPSIIQAHNLCFSTLSLRADAVAHLEAGKDYLEIEVGGRRLFFVKAHVRESLLSILLRDWLAMRKQIRSRIPQSSPEEAVLLDKQQAAIKVVCNSVYGFTGVQHGLLPCLHVAATVTTIGREMLLATREYVHARWAAFEQLLADFPEAADMRAPGPYSMRIIYGDTDSIFVLCRGLTAAGLTAMGDKMASHISRALFLPPIKLECEKTFTKLLLIAKKKYIGVIYGGKMLIKGVDLVRKNNCAFINRTSRALVDLLFYDDTVSGAAAALAERPAEEWLARPLPEGLQAFGAVLVDAHRRITDPERDIQDFVLTAELSRHPRAYTNKRLAHLTVYYKLMARRAQVPSIKDRIPYVIVAQTREVEETVARLAALRELDAAAPGDEPAPPAALPSPAKRPRETPSPADPPGGASKPRKLLVSELAEDPAYAIAHGVALNTDYYFSHLLGAACVTFKALFGNNAKITESLLKRFIPEVWHPPDDVTARLRAAGFGAVGAGATAEETRRMLHRAFDTLA.

2 disordered regions span residues 640 to 691 (QGRF…ETAG) and 1098 to 1134 (AAAPGDEPAPPAALPSPAKRPRETPSPADPPGGASKP). Residues 650-661 (APKRPAAAREDE) show a composition bias toward basic and acidic residues. Residues 662–675 (ERPEEEGEDEDERE) are compositionally biased toward acidic residues. Residues 676 to 691 (EGGGEREPDGARETAG) show a composition bias toward basic and acidic residues.

The protein belongs to the DNA polymerase type-B family. In terms of assembly, forms a complex with the ssDNA-binding protein UL29, the DNA polymerase processivity factor, and the alkaline exonuclease. Interacts with the putative helicase-primase complex subunit UL8; this interaction may coordinate leading and lagging strand DNA synthesis at the replication fork.

The protein localises to the host nucleus. The catalysed reaction is DNA(n) + a 2'-deoxyribonucleoside 5'-triphosphate = DNA(n+1) + diphosphate. The enzyme catalyses Endonucleolytic cleavage to 5'-phosphomonoester.. Its function is as follows. Replicates viral genomic DNA. The replication complex is composed of six viral proteins: the DNA polymerase, processivity factor, primase, primase-associated factor, helicase, and ssDNA-binding protein. Additionally, the polymerase contains an intrinsic ribonuclease H (RNase H) activity that specifically degrades RNA/DNA heteroduplexes or duplex DNA substrates in the 5' to 3' direction. Therefore, it can catalyze the excision of the RNA primers that initiate the synthesis of Okazaki fragments at a replication fork during viral DNA replication. This chain is DNA polymerase catalytic subunit, found in Homo sapiens (Human).